Here is a 62-residue protein sequence, read N- to C-terminus: MKVNDRVTVKTDGGPRRPGVVLAVEEFSEGTMYLVSLEDYPLGIWFFNEAGHQDGIFVEKAE.

This sequence belongs to the DsrB family.

The sequence is that of Protein DsrB from Shigella boydii serotype 18 (strain CDC 3083-94 / BS512).